The primary structure comprises 457 residues: UPF0328 protein ECU05_0030 (457 aa).

Disordered regions lie at residues 1-112 and 157-183; these read MPRP…PTAT and VKSQ…NPRI. Basic and acidic residues predominate over residues 74-94; sequence HTEGCHTHEANPEPNTKHTET. The segment covering 102 to 112 has biased composition (pro residues); that stretch reads CPPPHPGPTAT.

It belongs to the UPF0328 family.

The polypeptide is UPF0328 protein ECU05_0030 (Encephalitozoon cuniculi (strain GB-M1) (Microsporidian parasite)).